A 282-amino-acid chain; its full sequence is uncharacterized protein (282 aa).

Tyr50 serves as the catalytic Proton donor. Residue His115 participates in substrate binding.

The protein belongs to the aldo/keto reductase family.

This is an uncharacterized protein from Saccharomyces cerevisiae (strain ATCC 204508 / S288c) (Baker's yeast).